A 55-amino-acid polypeptide reads, in one-letter code: Large ribosomal subunit protein bL33 (55 aa).

Positions 1 to 11 (MAKGSREKIKL) are enriched in basic and acidic residues. The disordered stretch occupies residues 1 to 32 (MAKGSREKIKLESSASTGHFYTTSKNKRTKPE). Residues 13–24 (SSASTGHFYTTS) show a composition bias toward polar residues.

The protein belongs to the bacterial ribosomal protein bL33 family.

This is Large ribosomal subunit protein bL33 from Polynucleobacter necessarius subsp. necessarius (strain STIR1).